A 306-amino-acid polypeptide reads, in one-letter code: Small ribosomal subunit protein uS2 (306 aa).

The tract at residues 257-306 (EGDKKDETAAAAEVQTSAETEKVADAEKPAEAVAEAEAEAPAADADAEQA) is disordered. A compositionally biased stretch (basic and acidic residues) spans 275-286 (ETEKVADAEKPA). Over residues 287–300 (EAVAEAEAEAPAAD) the composition is skewed to low complexity.

Belongs to the universal ribosomal protein uS2 family.

The protein is Small ribosomal subunit protein uS2 of Streptomyces griseus subsp. griseus (strain JCM 4626 / CBS 651.72 / NBRC 13350 / KCC S-0626 / ISP 5235).